The sequence spans 84 residues: Small ribosomal subunit protein uS17 (84 aa).

It belongs to the universal ribosomal protein uS17 family. Part of the 30S ribosomal subunit.

One of the primary rRNA binding proteins, it binds specifically to the 5'-end of 16S ribosomal RNA. The protein is Small ribosomal subunit protein uS17 of Ureaplasma parvum serovar 3 (strain ATCC 27815 / 27 / NCTC 11736).